Reading from the N-terminus, the 561-residue chain is Tetracenomycin A2 monooxygenase-dioxygenase (561 aa).

FAD is bound by residues Leu15, Glu35, Gln128, and Met152. Tyr231 functions as the Proton acceptor in the catalytic mechanism. Asp322 contacts FAD.

This sequence belongs to the PheA/TfdB FAD monooxygenase family. Monomer. May form oligomers up to homohexamers. The cofactor is FAD.

It catalyses the reaction tetracenomycin A2 + 2 NADPH + 2 O2 + 2 H(+) = tetracenomycin C + 2 NADP(+) + H2O. Its pathway is antibiotic biosynthesis; tetracenomycin C biosynthesis. Its function is as follows. Involved in the biosynthesis of tetracenomycin C (TCM C). Catalyzes the triple hydroxylation of tetracenomycin A2 (TCM A2) at positions C-4, C-4a and C-12a to give tetracenomycin C (TCM C). Can use either NADH or NADPH as electron donors, but prefers NADPH under physiological conditions. The polypeptide is Tetracenomycin A2 monooxygenase-dioxygenase (Streptomyces glaucescens).